The chain runs to 239 residues: Ribosomal RNA small subunit methyltransferase G (239 aa).

S-adenosyl-L-methionine contacts are provided by residues Gly77, Phe82, 128–129, and Arg147; that span reads AE. A disordered region spans residues 219–239; it reads RKTPKKYPRKPGTPNKLPIEK.

Belongs to the methyltransferase superfamily. RNA methyltransferase RsmG family.

The protein resides in the cytoplasm. Specifically methylates the N7 position of guanine in position 535 of 16S rRNA. The chain is Ribosomal RNA small subunit methyltransferase G from Bacillus cytotoxicus (strain DSM 22905 / CIP 110041 / 391-98 / NVH 391-98).